The chain runs to 113 residues: Small ribosomal subunit protein eS24 (113 aa).

This sequence belongs to the eukaryotic ribosomal protein eS24 family.

The chain is Small ribosomal subunit protein eS24 from Metallosphaera sedula (strain ATCC 51363 / DSM 5348 / JCM 9185 / NBRC 15509 / TH2).